A 68-amino-acid chain; its full sequence is Phosphatidylinositol N-acetylglucosaminyltransferase ERI1 subunit (68 aa).

A run of 2 helical transmembrane segments spans residues 8–28 (FLVL…FYWL) and 34–54 (FLHY…WALI).

As to quaternary structure, component of the phosphatidylinositol N-acetylglucosaminyltransferase (GPI-GlcNAc transferase) complex composed of at least GPI1, GPI2, GPI3, GPI15, GPI19 and ERI1. Interacts with GPI2. Interacts with GTP-bound RAS2 in an effector loop-dependent manner.

The protein resides in the endoplasmic reticulum membrane. The protein operates within glycolipid biosynthesis; glycosylphosphatidylinositol-anchor biosynthesis. Its function is as follows. Probable component of the GPI-GlcNAc transferase (GPI-GnT) complex in the endoplasmic reticulum, a complex that catalyzes transfer of GlcNAc from UDP-GlcNAc to an acceptor phosphatidylinositol, the first step in the production of GPI-anchors for cell surface proteins. Ras may inhibit the enzyme activity of the GPI-GnT complex via the association between ERI1 and RAS2. The sequence is that of Phosphatidylinositol N-acetylglucosaminyltransferase ERI1 subunit (ERI1) from Saccharomyces cerevisiae (strain ATCC 204508 / S288c) (Baker's yeast).